Consider the following 188-residue polypeptide: UPF0301 protein Smal_0940 (188 aa).

This sequence belongs to the UPF0301 (AlgH) family.

The polypeptide is UPF0301 protein Smal_0940 (Stenotrophomonas maltophilia (strain R551-3)).